Reading from the N-terminus, the 453-residue chain is Gastrin/cholecystokinin type B receptor (453 aa).

Residues 1–57 (MDLLKLNRSLQGPGPGSGSSLCRPGVSLLNSSSAGNLSCETPRIRGTGTRELELTIR) lie on the Extracellular side of the membrane. 3 N-linked (GlcNAc...) asparagine glycosylation sites follow: N7, N30, and N36. Residues 58 to 79 (ITLYAVIFLMSVGGNVLIIVVL) form a helical membrane-spanning segment. The Cytoplasmic segment spans residues 80–87 (GLSRRLRT). The chain crosses the membrane as a helical span at residues 88–109 (VTNAFLLSLAVSDLLLAVACMP). The Extracellular segment spans residues 110 to 131 (FTLLPNLMGTFIFGTVICKAVS). Cysteines 127 and 205 form a disulfide. A helical membrane pass occupies residues 132 to 150 (YLMGVSVSVSTLNLAAIAL). Topologically, residues 151–170 (ERYSAICRPLQARVWQTRSH) are cytoplasmic. The chain crosses the membrane as a helical span at residues 171 to 189 (AARVILATWLLSGLLMVPY). At 190-219 (PVYTVVQPVGPRILQCMHLWPSERVQQMWS) the chain is on the extracellular side. The helical transmembrane segment at 220-242 (VLLLILLFFIPGVVMAVAYGLIS) threads the bilayer. Residues 243 to 339 (RELYLGLRFD…KLLAKKRVVR (97 aa)) are Cytoplasmic-facing. Residues 257-276 (SETQSRVRNQGGLPGGAAAP) are disordered. A helical transmembrane segment spans residues 340–361 (MLLVIVLLFFVCWLPVYSANTW). The Extracellular portion of the chain corresponds to 362–379 (RAFDGPGARRALAGAPIS). Residues 380 to 400 (FIHLLSYTSACANPLVYCFMH) traverse the membrane as a helical segment. At 401-453 (RRFRQACLDTCARCCPRPPRARPRPLPDEDPPTPSIASLSRLSYTTISTLGPG) the chain is on the cytoplasmic side. The S-palmitoyl cysteine moiety is linked to residue C414.

Belongs to the G-protein coupled receptor 1 family.

It localises to the cell membrane. Its function is as follows. Receptor for gastrin and cholecystokinin. The CCK-B receptors occur throughout the central nervous system where they modulate anxiety, analgesia, arousal, and neuroleptic activity. This receptor mediates its action by association with G proteins that activate a phosphatidylinositol-calcium second messenger system. This chain is Gastrin/cholecystokinin type B receptor (Cckbr), found in Mus musculus (Mouse).